Consider the following 158-residue polypeptide: Ribosome association toxin RatA (158 aa).

It belongs to the ribosome association toxin RatA family. In terms of assembly, associates with 50S ribosomes.

Functionally, toxic component of a type II toxin-antitoxin (TA) system. Binds to 50S ribosomal subunits, preventing them from associating with 30S subunits to form 70S ribosomes and reducing polysomes. It does not cause ribosomes to dissociate however. The antibiotic paromomycin blocks the anti-association activity of RatA. Overexpression results in inhibition of growth in liquid cultures, and in a decrease in protein translation. The other gene of this operon, ratB, is not the cognate antitoxin in this strain; in CFT073 however it does fulfill this function. Low level expression in a deletion mutant increases resistance to acidified sodium nitrate which causes nitrosative stress. In Escherichia coli (strain K12), this protein is Ribosome association toxin RatA (ratA).